The sequence spans 419 residues: Heparan-sulfate 6-O-sulfotransferase 3-B (419 aa).

Residues M1–K7 are Cytoplasmic-facing. A helical; Signal-anchor for type II membrane protein membrane pass occupies residues W8 to P28. Topologically, residues A29–W419 are lumenal. N77 is a glycosylation site (N-linked (GlcNAc...) asparagine). H101–T109 contributes to the 3'-phosphoadenylyl sulfate binding site. Residues K131–K132, R148, W153, and H158 contribute to the substrate site. The active-site Proton acceptor is H158. 2 residues coordinate 3'-phosphoadenylyl sulfate: R191 and S199. Residues H203 and W210 each contribute to the substrate site. N270 and N275 each carry an N-linked (GlcNAc...) asparagine glycan. Position 323 to 325 (T323 to I325) interacts with 3'-phosphoadenylyl sulfate. N326 is a glycosylation site (N-linked (GlcNAc...) asparagine). R329–A330 contacts 3'-phosphoadenylyl sulfate. 2 N-linked (GlcNAc...) asparagine glycosylation sites follow: N393 and N402.

It belongs to the sulfotransferase 6 family. As to expression, in early somitogenesis, expressed in presumptive forebrain and midbrain, tail bud and Kupffer's vesicle. During mid-somitogenesis, ubiquitous expression which is strongest in the somites and eye. During late somitogenesis, predominantly expressed in eye, hindbrain and ventral somites. At 24 hours post-fertilization (hpf), restricted to lens and neural retina, brain, otic vesicle and somites. At 36 hpf, brain expression is restricted to telencephalon. At 48 hpf, restricted to telencephalon and pectoral fin.

The protein localises to the membrane. It catalyses the reaction alpha-D-glucosaminyl-[heparan sulfate](n) + 3'-phosphoadenylyl sulfate = 6-sulfo-alpha-D-glucosaminyl-[heparan sulfate](n) + adenosine 3',5'-bisphosphate + H(+). Its function is as follows. 6-O-sulfation enzyme which catalyzes the transfer of sulfate from 3'-phosphoadenosine 5'-phosphosulfate (PAPS) to position 6 of the N-sulfoglucosamine residue (GlcNS) of heparan sulfate. This is Heparan-sulfate 6-O-sulfotransferase 3-B from Danio rerio (Zebrafish).